A 156-amino-acid chain; its full sequence is tRNA (cytidine(34)-2'-O)-methyltransferase (156 aa).

Gly102, Leu124, and Ser132 together coordinate S-adenosyl-L-methionine.

This sequence belongs to the class IV-like SAM-binding methyltransferase superfamily. RNA methyltransferase TrmH family. TrmL subfamily. Homodimer.

Its subcellular location is the cytoplasm. It carries out the reaction cytidine(34) in tRNA + S-adenosyl-L-methionine = 2'-O-methylcytidine(34) in tRNA + S-adenosyl-L-homocysteine + H(+). The enzyme catalyses 5-carboxymethylaminomethyluridine(34) in tRNA(Leu) + S-adenosyl-L-methionine = 5-carboxymethylaminomethyl-2'-O-methyluridine(34) in tRNA(Leu) + S-adenosyl-L-homocysteine + H(+). Functionally, methylates the ribose at the nucleotide 34 wobble position in the two leucyl isoacceptors tRNA(Leu)(CmAA) and tRNA(Leu)(cmnm5UmAA). Catalyzes the methyl transfer from S-adenosyl-L-methionine to the 2'-OH of the wobble nucleotide. This is tRNA (cytidine(34)-2'-O)-methyltransferase from Burkholderia ambifaria (strain ATCC BAA-244 / DSM 16087 / CCUG 44356 / LMG 19182 / AMMD) (Burkholderia cepacia (strain AMMD)).